The primary structure comprises 245 residues: 1-(5-phosphoribosyl)-5-[(5-phosphoribosylamino)methylideneamino] imidazole-4-carboxamide isomerase (245 aa).

Catalysis depends on Asp-7, which acts as the Proton acceptor. The active-site Proton donor is Asp-129.

Belongs to the HisA/HisF family.

It is found in the cytoplasm. It catalyses the reaction 1-(5-phospho-beta-D-ribosyl)-5-[(5-phospho-beta-D-ribosylamino)methylideneamino]imidazole-4-carboxamide = 5-[(5-phospho-1-deoxy-D-ribulos-1-ylimino)methylamino]-1-(5-phospho-beta-D-ribosyl)imidazole-4-carboxamide. It functions in the pathway amino-acid biosynthesis; L-histidine biosynthesis; L-histidine from 5-phospho-alpha-D-ribose 1-diphosphate: step 4/9. This is 1-(5-phosphoribosyl)-5-[(5-phosphoribosylamino)methylideneamino] imidazole-4-carboxamide isomerase from Salmonella choleraesuis (strain SC-B67).